Consider the following 312-residue polypeptide: HTH-type transcriptional regulator MetR (312 aa).

Residues 1–59 form the HTH lysR-type domain; the sequence is MIEIKHLRTLQALKNNGSLSAAAIQLHQTQSAISHQFNELEKKLGFKLFIRKSNPIKFT. Positions 19–38 form a DNA-binding region, H-T-H motif; it reads LSAAAIQLHQTQSAISHQFN.

It belongs to the LysR transcriptional regulatory family.

It localises to the cytoplasm. In terms of biological role, control of the last step in methionine biosynthesis; MetR is a positive activator of the metA, metE and metH genes. The protein is HTH-type transcriptional regulator MetR (metR) of Buchnera aphidicola subsp. Schizaphis graminum (strain Sg).